We begin with the raw amino-acid sequence, 328 residues long: Hairy/enhancer-of-split related with YRPW motif-like protein (328 aa).

Residues 1-57 are disordered; that stretch reads MKRPKEPSGSDGESDGPIDVGQEGQLSQMARPLSTPSSSQMQARKKHRGIIEKRRRD. Residues 24–42 are compositionally biased toward polar residues; it reads GQLSQMARPLSTPSSSQMQ. Residues 42–111 are transcriptional repression and interaction with NCOR1 and SIN3A; it reads QARKKHRGII…GGTGFFDARA (70 aa). Positions 43-98 constitute a bHLH domain; sequence ARKKHRGIIEKRRRDRINSSLSELRRLVPTAFEKQGSSKLEKAEVLQMTVDHLKML. The Orange domain occupies 116-153; the sequence is FRSIGFRECLTEVIRYLGVLEGPSSRADPVRIRLLSHL. Residues 239–308 form a disordered region; it reads SRGASSTRRA…NSSSPGPAGR (70 aa). The segment covering 261–270 has biased composition (low complexity); the sequence is APSSRAARSS.

It belongs to the HEY family. Self-associates. Interacts with GATA4, GATA6, HES1, HEY1 and HEY2. Interacts with HDAC1, NCOR1 and SIN3A.

It localises to the nucleus. In terms of biological role, downstream effector of Notch signaling which may be required for cardiovascular development. Transcriptional repressor which binds preferentially to the canonical E box sequence 5'-CACGTG-3'. Represses transcription by the cardiac transcriptional activators GATA4 and GATA6. This is Hairy/enhancer-of-split related with YRPW motif-like protein (HEYL) from Homo sapiens (Human).